The sequence spans 227 residues: Cytidylate kinase (227 aa).

G12–T20 lines the ATP pocket.

This sequence belongs to the cytidylate kinase family. Type 1 subfamily.

The protein localises to the cytoplasm. It carries out the reaction CMP + ATP = CDP + ADP. The enzyme catalyses dCMP + ATP = dCDP + ADP. This chain is Cytidylate kinase, found in Salmonella typhimurium (strain LT2 / SGSC1412 / ATCC 700720).